The primary structure comprises 400 residues: Golgin-45 (400 aa).

A disordered region spans residues 1–36; it reads MEKMTTLKSFESKGILTSTPIRGAGDGMETEEPPKS. A Tankyrase-binding motif motif is present at residues 22-26; sequence RGAGD. Ser-53 is subject to Phosphoserine. The stretch at 126–263 forms a coiled coil; it reads LSEVKKVLEK…LSEREQFRQE (138 aa). Position 356 is a phosphoserine (Ser-356). Residues 394–400 are essential for interaction with GORASP2; sequence QGELLAL.

Interacts with GORASP2. Interacts with the GTP-bound form of RAB2, but not with other Golgi Rab proteins. Identified in a complex with RAB2 and GORASP2. Post-translationally, ADP-ribosylated by tankyrase TNKS and TNKS2. Poly-ADP-ribosylated protein is recognized by RNF146, followed by ubiquitination. In terms of processing, ubiquitinated by RNF146 when poly-ADP-ribosylated, leading to its degradation.

It is found in the golgi apparatus membrane. In terms of biological role, required for normal Golgi structure and for protein transport from the endoplasmic reticulum (ER) through the Golgi apparatus to the cell surface. This chain is Golgin-45, found in Rattus norvegicus (Rat).